The primary structure comprises 276 residues: Release factor glutamine methyltransferase (276 aa).

Residues 116-120 (GTGTG), Asp139, Trp167, and Asn182 each bind S-adenosyl-L-methionine. Residue 182 to 185 (NPPY) coordinates substrate.

The protein belongs to the protein N5-glutamine methyltransferase family. PrmC subfamily.

The enzyme catalyses L-glutaminyl-[peptide chain release factor] + S-adenosyl-L-methionine = N(5)-methyl-L-glutaminyl-[peptide chain release factor] + S-adenosyl-L-homocysteine + H(+). Functionally, methylates the class 1 translation termination release factors RF1/PrfA and RF2/PrfB on the glutamine residue of the universally conserved GGQ motif. This is Release factor glutamine methyltransferase from Pseudomonas aeruginosa (strain ATCC 15692 / DSM 22644 / CIP 104116 / JCM 14847 / LMG 12228 / 1C / PRS 101 / PAO1).